Reading from the N-terminus, the 910-residue chain is Triacylglycerol lipase 4 (910 aa).

The span at 51-66 (SKDNSDVERVEEDAGK) shows a compositional bias: basic and acidic residues. The tract at residues 51–120 (SKDNSDVERV…TDEGEDERQG (70 aa)) is disordered. Ser-55 bears the Phosphoserine mark. A compositionally biased stretch (polar residues) spans 70–85 (TGKNKTTNKVNFNLDT). Residues 90–116 (KLDDDQETVTENENNDIEMVETDEGED) are compositionally biased toward acidic residues. Residues 282 to 483 (LVLSGGGTFG…DNDLPISRLS (202 aa)) enclose the PNPLA domain. The GXGXXG motif lies at 286–291 (GGGTFG). The GXSXG motif lies at 313-317 (GSSAG). Ser-315 (nucleophile) is an active-site residue. The active-site Proton acceptor is the Asp-470. 2 disordered regions span residues 657–683 (EQTS…DNHI) and 713–777 (SPSG…PILQ). Positions 666–683 (PENSTLLTRTPTKGDNHI) are enriched in polar residues. Thr-675 carries the post-translational modification Phosphothreonine; by Cdk1. Residues Ser-737, Ser-749, Ser-751, and Ser-836 each carry the phosphoserine modification. The segment covering 739–768 (TISTSRRPAKSFSFSVASPTSRMLRQSSKI) has biased composition (polar residues). Residues 874–910 (RRHSIDGRPPSQATKSSPFRSRPSSSTQHKSTTSFTQ) form a disordered region. A compositionally biased stretch (low complexity) spans 889 to 899 (SSPFRSRPSSS). A Phosphoserine; by Cdk1 modification is found at Ser-890. A compositionally biased stretch (polar residues) spans 900-910 (TQHKSTTSFTQ).

Post-translationally, phosphorylation at Thr-675 and Ser-890 by Cdk1/CDC28 stimulates enzyme activity in vivo.

It localises to the lipid droplet. The enzyme catalyses a triacylglycerol + H2O = a diacylglycerol + a fatty acid + H(+). The catalysed reaction is 1,2,3-tri-(9Z-octadecenoyl)-glycerol + H2O = di-(9Z)-octadecenoylglycerol + (9Z)-octadecenoate + H(+). It catalyses the reaction 1,2-dihexadecanoyl-sn-glycero-3-phosphocholine + H2O = 1-hexadecanoyl-sn-glycero-3-phosphocholine + hexadecanoate + H(+). It carries out the reaction cholesteryl (9Z-octadecenoate) + H2O = cholesterol + (9Z)-octadecenoate + H(+). The enzyme catalyses 1-(9Z-octadecenoyl)-sn-glycero-3-phosphate + (9Z)-octadecenoyl-CoA = 1,2-di-(9Z-octadecenoyl)-sn-glycero-3-phosphate + CoA. Its activity is regulated as follows. Phosphorylated and activated by cyclin-dependent kinase 1 (Cdk1/CDC28). Loses its lipolytic activity in cells lacking nonpolar lipids, but retains its side activity as lysophospholipid acyltransferase. Functionally, lipid particle-localized triacylglycerol (TAG) lipase. The lipid droplet/particle is a lipid storage compartment which serves as a depot of energy and building blocks for membrane lipid biosynthesis. Involved in the mobilization of the non-polar storage lipids triacylglycerols (TAGs) from lipid particles by hydrolysis of TAGs, releasing and supplying specific fatty acids to the appropriate metabolic pathways. Also has steryl ester (SE) hydrolase and phospholipase A(2) (PLA(2)) activities, and catalyzes the acylation of lysophosphatidic acid (LPA). Contributes to early bud formation in late G1 phase of the cell cycle upon phosphorylation and activation by cyclin-dependent kinase 1 (Cdk1/CDC28). The polypeptide is Triacylglycerol lipase 4 (TGL4) (Saccharomyces cerevisiae (strain ATCC 204508 / S288c) (Baker's yeast)).